The chain runs to 640 residues: Fructose-1,6-bisphosphatase class 3 (640 aa).

This sequence belongs to the FBPase class 3 family. It depends on Mn(2+) as a cofactor.

It carries out the reaction beta-D-fructose 1,6-bisphosphate + H2O = beta-D-fructose 6-phosphate + phosphate. It participates in carbohydrate biosynthesis; gluconeogenesis. The protein is Fructose-1,6-bisphosphatase class 3 of Lactococcus lactis subsp. cremoris (strain MG1363).